The chain runs to 111 residues: uncharacterized protein (111 aa).

This is an uncharacterized protein from Aquifex aeolicus (strain VF5).